Consider the following 226-residue polypeptide: Ribonuclease HII (226 aa).

An RNase H type-2 domain is found at 29–220 (GPVAGVDEAG…VVAAGVRLEQ (192 aa)). Residues D35, E36, and D129 each contribute to the a divalent metal cation site.

This sequence belongs to the RNase HII family. Requires Mn(2+) as cofactor. It depends on Mg(2+) as a cofactor.

Its subcellular location is the cytoplasm. It catalyses the reaction Endonucleolytic cleavage to 5'-phosphomonoester.. In terms of biological role, endonuclease that specifically degrades the RNA of RNA-DNA hybrids. This is Ribonuclease HII from Rhodococcus erythropolis (strain PR4 / NBRC 100887).